The following is a 191-amino-acid chain: Protein RER1A (191 aa).

Met1 is modified (N-acetylmethionine). A run of 4 helical transmembrane segments spans residues 39-57, 60-80, 115-135, and 136-156; these read YRWI…RVYY, GFYI…IGFL, FKFW…TFFS, and VFDV…LFVL.

This sequence belongs to the RER1 family.

It localises to the membrane. Its function is as follows. Involved in the retrieval of endoplasmic reticulum membrane proteins from the early Golgi compartment. This chain is Protein RER1A (RER1A), found in Arabidopsis thaliana (Mouse-ear cress).